A 95-amino-acid chain; its full sequence is Fungal defensin plectasin (95 aa).

Positions 1–23 (MQFTTILSIGITVFGLLNTGAFA) are cleaved as a signal peptide. Residues 24–55 (APQPVPEAYAVSDPEAHPDDFAGMDANQLQKR) constitute a propeptide that is removed on maturation. The beta-D-GlcNAc-(1-&gt;4)-Mur2Ac(oyl-L-Ala-gamma-D-Glu-L-Lys-D-Ala-D-Ala)-di-trans,octa-cis-undecaprenyl diphosphate site is built by Phe-57, Gly-58, and Cys-59. 3 disulfides stabilise this stretch: Cys-59/Cys-85, Cys-70/Cys-92, and Cys-74/Cys-94. The tract at residues 61–64 (GPWD) is binds to membrane interface. 7 residues coordinate beta-D-GlcNAc-(1-&gt;4)-Mur2Ac(oyl-L-Ala-gamma-D-Glu-L-Lys-D-Ala-D-Ala)-di-trans,octa-cis-undecaprenyl diphosphate: Asp-67, His-73, Tyr-84, Ala-86, Gly-88, Cys-92, and Lys-93. The interval 86-92 (AKGGFVC) is binds to membrane interface.

This sequence belongs to the invertebrate defensin family. Type 2 subfamily.

The protein localises to the secreted. The protein resides in the host cell membrane. In terms of biological role, antimicrobial peptide that potently acts against several species of Gram-positive bacteria. It selectively inhibits peptidoglycan biosynthesis through complex formation with the cell wall precursor lipid II (1:1 molar ratio) thus inhibiting cell wall synthesis. It does not disrupt cell membranes. Is especially active against numerous clinical isolates of S.pneumoniae, including all 90 different serotypes and isolates resistant to clinically used antibiotics. In vitro, shows considerable selectivity for bacteria over mammalian cells. The peptide synthesized in D-amino acids does not show antibacterial activity. In vitro, acts on voltage-gated potassium channels by moderately inhibiting mammalian Kv1.3/KCNA3 (IC(50)=2.8 uM), and moderately inhibiting others potassium channels. The sequence is that of Fungal defensin plectasin (DEF) from Pseudoplectania nigrella (Ebony cup).